The following is a 196-amino-acid chain: Early light-induced protein, chloroplastic (196 aa).

Residues 1 to 48 constitute a chloroplast transit peptide; that stretch reads MAVSSCQSIMSNSMTNISSRSRVNQFTNIPSVYIPTLRRNVSLKVRSM. Positions 47–57 are enriched in basic and acidic residues; that stretch reads SMAEGEPKEQS. The interval 47-81 is disordered; the sequence is SMAEGEPKEQSKVAVDPTTPTASTPTPQPAYTRPP. 3 helical membrane-spanning segments follow: residues 105–125, 132–152, and 176–196; these read LAMI…QGLS, GVAW…IPFF, and IAML…TSLV.

It belongs to the ELIP/psbS family.

The protein resides in the plastid. Its subcellular location is the chloroplast membrane. Functionally, probably involved in the integration of pigments into the mature pigment-protein complexes. This is Early light-induced protein, chloroplastic from Pisum sativum (Garden pea).